The chain runs to 705 residues: CAP-Gly domain-containing linker protein 4 (705 aa).

3 ANK repeats span residues 65 to 101, 149 to 180, and 186 to 215; these read TSVSELFAILRQWVPQVQQNIDIIGNEILKRGCNVND, TNMNALHYAAYFDVPELIRVILKTSKPKDVDA, and NFGTALHIAAYNLCAGAVKCLLEQGANPAF. The CAP-Gly 1 domain occupies 303 to 345; it reads GTTEFASGQWAGIELDEPEGKNNGSVGKVQYFKCAPKYGIFAP. Disordered stretches follow at residues 391-410 and 431-479; these read MTSKKDSASESTLSLPPGEE and TSSL…ANNS. Over residues 441–452 the composition is skewed to polar residues; the sequence is PKKQNAISSNKK. Residues 455 to 479 show a composition bias toward low complexity; the sequence is SKSPSLSSRASAGLNSSATSTANNS. Residues 505–547 enclose the CAP-Gly 2 domain; that stretch reads GTTNFAPGYWYGIELEKPHGKNDGSVGGVQYFSCSPRYGIFAP. A phosphoserine mark is found at Ser557 and Ser609. Residues 644-686 form the CAP-Gly 3 domain; the sequence is GPTDFASGIWLGLELRSAKGKNDGSVGDKRYFTCKPNHGVLVR.

The sequence is that of CAP-Gly domain-containing linker protein 4 (CLIP4) from Homo sapiens (Human).